Reading from the N-terminus, the 589-residue chain is Transmembrane 9 superfamily member 1 (589 aa).

The N-terminal stretch at 1–27 (MTVLGHPRSWSCHCLPVLILLLGIGHG) is a signal peptide. The N-linked (GlcNAc...) asparagine glycan is linked to N178. The next 4 helical transmembrane spans lie at 237 to 257 (LSIINSMVLVFLLVGFVAVIL), 310 to 330 (VLGVGAQFLALGTGIIVMALL), 339 to 359 (GAINSAAILLYALTCCISGYV), and 373 to 393 (VWNIILTTSLFSVPFFLTWSV). N-linked (GlcNAc...) asparagine glycosylation occurs at N401. The next 3 membrane-spanning stretches (helical) occupy residues 412–432 (ILLLLTVWLLVGFPLTVIGGI), 482–502 (GILFFVFAILLSVGACISIAL), and 518–538 (SVLSVGSTGLFIFLYSVFYYA). A glycan (N-linked (GlcNAc...) asparagine) is linked at N542. Residues 552–572 (FFGYSLLTGYVFFLMLGTISF) form a helical membrane-spanning segment.

Belongs to the nonaspanin (TM9SF) (TC 9.A.2) family.

Its subcellular location is the lysosome membrane. The protein resides in the cytoplasmic vesicle. The protein localises to the autophagosome membrane. Plays an essential role in autophagy. The chain is Transmembrane 9 superfamily member 1 (Tm9sf1) from Rattus norvegicus (Rat).